Here is a 379-residue protein sequence, read N- to C-terminus: Queuine tRNA-ribosyltransferase (379 aa).

Residue D94 is the Proton acceptor of the active site. Residues 94-98, D148, Q191, and G218 contribute to the substrate site; that span reads DSGGF. An RNA binding region spans residues 249 to 255; that stretch reads GVGSPDA. The Nucleophile role is filled by D268. The interval 273–277 is RNA binding; important for wobble base 34 recognition; the sequence is TRIAR. Residues C306, C308, C311, and H337 each contribute to the Zn(2+) site.

Belongs to the queuine tRNA-ribosyltransferase family. In terms of assembly, homodimer. Within each dimer, one monomer is responsible for RNA recognition and catalysis, while the other monomer binds to the replacement base PreQ1. It depends on Zn(2+) as a cofactor.

The enzyme catalyses 7-aminomethyl-7-carbaguanine + guanosine(34) in tRNA = 7-aminomethyl-7-carbaguanosine(34) in tRNA + guanine. The protein operates within tRNA modification; tRNA-queuosine biosynthesis. Its function is as follows. Catalyzes the base-exchange of a guanine (G) residue with the queuine precursor 7-aminomethyl-7-deazaguanine (PreQ1) at position 34 (anticodon wobble position) in tRNAs with GU(N) anticodons (tRNA-Asp, -Asn, -His and -Tyr). Catalysis occurs through a double-displacement mechanism. The nucleophile active site attacks the C1' of nucleotide 34 to detach the guanine base from the RNA, forming a covalent enzyme-RNA intermediate. The proton acceptor active site deprotonates the incoming PreQ1, allowing a nucleophilic attack on the C1' of the ribose to form the product. After dissociation, two additional enzymatic reactions on the tRNA convert PreQ1 to queuine (Q), resulting in the hypermodified nucleoside queuosine (7-(((4,5-cis-dihydroxy-2-cyclopenten-1-yl)amino)methyl)-7-deazaguanosine). This chain is Queuine tRNA-ribosyltransferase, found in Staphylococcus haemolyticus (strain JCSC1435).